Consider the following 279-residue polypeptide: uncharacterized protein (279 aa).

A signal peptide spans 1–19 (MKLKLYLIPLLASGIILSA). C20 carries the N-palmitoyl cysteine lipid modification. A lipid anchor (S-diacylglycerol cysteine) is attached at C20.

This sequence belongs to the MG439/MG440 family.

The protein localises to the cell membrane. This is an uncharacterized protein from Mycoplasma pneumoniae (strain ATCC 29342 / M129 / Subtype 1) (Mycoplasmoides pneumoniae).